We begin with the raw amino-acid sequence, 163 residues long: Protein-export protein SecB (163 aa).

The protein belongs to the SecB family. Homotetramer, a dimer of dimers. One homotetramer interacts with 1 SecA dimer.

The protein resides in the cytoplasm. In terms of biological role, one of the proteins required for the normal export of preproteins out of the cell cytoplasm. It is a molecular chaperone that binds to a subset of precursor proteins, maintaining them in a translocation-competent state. It also specifically binds to its receptor SecA. In Caulobacter vibrioides (strain ATCC 19089 / CIP 103742 / CB 15) (Caulobacter crescentus), this protein is Protein-export protein SecB.